Consider the following 233-residue polypeptide: Large ribosomal subunit protein uL1 (233 aa).

The protein belongs to the universal ribosomal protein uL1 family. In terms of assembly, part of the 50S ribosomal subunit.

Its function is as follows. Binds directly to 23S rRNA. The L1 stalk is quite mobile in the ribosome, and is involved in E site tRNA release. Protein L1 is also a translational repressor protein, it controls the translation of the L11 operon by binding to its mRNA. This chain is Large ribosomal subunit protein uL1, found in Buchnera aphidicola subsp. Baizongia pistaciae (strain Bp).